The primary structure comprises 165 residues: 2-C-methyl-D-erythritol 2,4-cyclodiphosphate synthase (165 aa).

Residues aspartate 12 and histidine 14 each coordinate a divalent metal cation. 4-CDP-2-C-methyl-D-erythritol 2-phosphate is bound by residues 12–14 (DVH) and 38–39 (HS). Residue histidine 46 coordinates a divalent metal cation. 4-CDP-2-C-methyl-D-erythritol 2-phosphate is bound by residues 60-62 (DIG), 65-69 (FPDTD), phenylalanine 143, and arginine 146.

It belongs to the IspF family. As to quaternary structure, homotrimer. It depends on a divalent metal cation as a cofactor.

It catalyses the reaction 4-CDP-2-C-methyl-D-erythritol 2-phosphate = 2-C-methyl-D-erythritol 2,4-cyclic diphosphate + CMP. It participates in isoprenoid biosynthesis; isopentenyl diphosphate biosynthesis via DXP pathway; isopentenyl diphosphate from 1-deoxy-D-xylulose 5-phosphate: step 4/6. In terms of biological role, involved in the biosynthesis of isopentenyl diphosphate (IPP) and dimethylallyl diphosphate (DMAPP), two major building blocks of isoprenoid compounds. Catalyzes the conversion of 4-diphosphocytidyl-2-C-methyl-D-erythritol 2-phosphate (CDP-ME2P) to 2-C-methyl-D-erythritol 2,4-cyclodiphosphate (ME-CPP) with a corresponding release of cytidine 5-monophosphate (CMP). This chain is 2-C-methyl-D-erythritol 2,4-cyclodiphosphate synthase, found in Aromatoleum aromaticum (strain DSM 19018 / LMG 30748 / EbN1) (Azoarcus sp. (strain EbN1)).